A 682-amino-acid chain; its full sequence is DNA-directed RNA polymerase subunit beta' (682 aa).

Positions 69, 71, 87, and 90 each coordinate Zn(2+). Positions 489, 491, and 493 each coordinate Mg(2+).

It belongs to the RNA polymerase beta' chain family. RpoC1 subfamily. As to quaternary structure, in plastids the minimal PEP RNA polymerase catalytic core is composed of four subunits: alpha, beta, beta', and beta''. When a (nuclear-encoded) sigma factor is associated with the core the holoenzyme is formed, which can initiate transcription. The cofactor is Mg(2+). Requires Zn(2+) as cofactor.

It localises to the plastid. The protein resides in the chloroplast. It catalyses the reaction RNA(n) + a ribonucleoside 5'-triphosphate = RNA(n+1) + diphosphate. Its function is as follows. DNA-dependent RNA polymerase catalyzes the transcription of DNA into RNA using the four ribonucleoside triphosphates as substrates. The polypeptide is DNA-directed RNA polymerase subunit beta' (Acorus calamus var. americanus (American sweet flag)).